The following is a 1216-amino-acid chain: Tyrosine-protein kinase receptor ver-4 (1216 aa).

The Extracellular portion of the chain corresponds to 1–789; it reads MRVSLTEFLV…VKVAGASSSS (789 aa). N-linked (GlcNAc...) asparagine glycosylation is found at N142, N195, N206, N245, N283, N333, N348, N384, N402, N412, N496, N508, N588, N599, N664, and N703. 2 Ig-like C2-type domains span residues 596 to 691 and 697 to 783; these read KSVN…TSIS and PPFL…VKVA. C619 and C675 are oxidised to a cystine. C721 and C765 are joined by a disulfide. A helical transmembrane segment spans residues 790–810; the sequence is FFWLFITFFAFVVVGIVVSLL. Topologically, residues 811–1216 are cytoplasmic; that stretch reads WKLFGQKDLK…WVQKPTQLFF (406 aa). The 312-residue stretch at 870 to 1181 folds into the Protein kinase domain; it reads LEILETLGSG…IKLFKNHIQY (312 aa). Residues 876–884 and K908 contribute to the ATP site; that span reads LGSGQFGIV. The active-site Proton acceptor is the D1042.

The protein belongs to the protein kinase superfamily. Tyr protein kinase family.

The protein resides in the cell membrane. It carries out the reaction L-tyrosyl-[protein] + ATP = O-phospho-L-tyrosyl-[protein] + ADP + H(+). In terms of biological role, receptor tyrosine kinase which may be involved, downstream of pvf-1, in the positioning of ray 1, the most anterior ray sensillum in the male tail. The chain is Tyrosine-protein kinase receptor ver-4 from Caenorhabditis elegans.